A 230-amino-acid chain; its full sequence is Large ribosomal subunit protein uL1 (230 aa).

The protein belongs to the universal ribosomal protein uL1 family. Part of the 50S ribosomal subunit.

Its function is as follows. Binds directly to 23S rRNA. The L1 stalk is quite mobile in the ribosome, and is involved in E site tRNA release. Protein L1 is also a translational repressor protein, it controls the translation of the L11 operon by binding to its mRNA. The polypeptide is Large ribosomal subunit protein uL1 (Leuconostoc mesenteroides subsp. mesenteroides (strain ATCC 8293 / DSM 20343 / BCRC 11652 / CCM 1803 / JCM 6124 / NCDO 523 / NBRC 100496 / NCIMB 8023 / NCTC 12954 / NRRL B-1118 / 37Y)).